We begin with the raw amino-acid sequence, 283 residues long: Cilia- and flagella-associated protein 77 (283 aa).

Positions 151 to 170 (DQEDRRQKEPPPIPPNMTFG) are disordered.

This sequence belongs to the CFAP77 family. In terms of assembly, microtubule inner protein component of sperm flagellar doublet microtubules.

The protein localises to the cytoplasm. It is found in the cytoskeleton. The protein resides in the cilium axoneme. It localises to the flagellum axoneme. Microtubule inner protein (MIP) part of the dynein-decorated doublet microtubules (DMTs) in cilia axoneme, which is required for motile cilia beating. The polypeptide is Cilia- and flagella-associated protein 77 (Mus musculus (Mouse)).